Reading from the N-terminus, the 104-residue chain is MERQNIRIRLKAFDHRVLDNSTREIVSTAKRTGANVRGPIPLPTRIEKFTVLRSPHIDKKSREQFEIRTHKRLLDIVDPTPQTVDALMKLDLSAGVDVEIKLGA.

The protein belongs to the universal ribosomal protein uS10 family. Part of the 30S ribosomal subunit.

In terms of biological role, involved in the binding of tRNA to the ribosomes. This chain is Small ribosomal subunit protein uS10, found in Maricaulis maris (strain MCS10) (Caulobacter maris).